The following is a 398-amino-acid chain: uncharacterized protein (398 aa).

This is an uncharacterized protein from Neisseria meningitidis serogroup B (strain ATCC BAA-335 / MC58).